Here is a 164-residue protein sequence, read N- to C-terminus: CB1 cannabinoid receptor-interacting protein 1 (164 aa).

The protein belongs to the CNRIP family. As to quaternary structure, interacts with the cannabinoid receptor CNR1 (via C-terminus). Does not interact with cannabinoid receptor CNR2.

In terms of biological role, suppresses cannabinoid receptor CNR1-mediated tonic inhibition of voltage-gated calcium channels. Functionally, does not suppress cannabinoid receptor CNR1-mediated tonic inhibition of voltage-gated calcium channels. The polypeptide is CB1 cannabinoid receptor-interacting protein 1 (CNRIP1) (Homo sapiens (Human)).